Reading from the N-terminus, the 1024-residue chain is Beta-galactosidase 2 (1024 aa).

Substrate is bound by residues asparagine 103 and aspartate 202. Aspartate 202 is a Na(+) binding site. Residues glutamate 417, histidine 419, and glutamate 462 each coordinate Mg(2+). Substrate is bound by residues glutamate 462 and 538–541; that span reads EYAH. Glutamate 462 acts as the Proton donor in catalysis. Glutamate 538 functions as the Nucleophile in the catalytic mechanism. Asparagine 598 contacts Mg(2+). Phenylalanine 602 and asparagine 605 together coordinate Na(+). Substrate is bound by residues asparagine 605 and tryptophan 1000.

This sequence belongs to the glycosyl hydrolase 2 family. As to quaternary structure, homotetramer. Mg(2+) serves as cofactor. Na(+) is required as a cofactor.

The catalysed reaction is Hydrolysis of terminal non-reducing beta-D-galactose residues in beta-D-galactosides.. The polypeptide is Beta-galactosidase 2 (Klebsiella pneumoniae subsp. pneumoniae (strain ATCC 700721 / MGH 78578)).